The sequence spans 236 residues: Phosphoribosylaminoimidazole-succinocarboxamide synthase (236 aa).

It belongs to the SAICAR synthetase family.

It carries out the reaction 5-amino-1-(5-phospho-D-ribosyl)imidazole-4-carboxylate + L-aspartate + ATP = (2S)-2-[5-amino-1-(5-phospho-beta-D-ribosyl)imidazole-4-carboxamido]succinate + ADP + phosphate + 2 H(+). It functions in the pathway purine metabolism; IMP biosynthesis via de novo pathway; 5-amino-1-(5-phospho-D-ribosyl)imidazole-4-carboxamide from 5-amino-1-(5-phospho-D-ribosyl)imidazole-4-carboxylate: step 1/2. This chain is Phosphoribosylaminoimidazole-succinocarboxamide synthase, found in Pseudomonas syringae pv. tomato (strain ATCC BAA-871 / DC3000).